The following is a 133-amino-acid chain: Fatty acid-binding protein, heart (133 aa).

An N-acetylvaline modification is found at valine 2. Threonine 8 is modified (phosphothreonine). Residue tyrosine 20 is modified to Phosphotyrosine; by Tyr-kinases. The residue at position 23 (serine 23) is a Phosphoserine. Threonine 30 bears the Phosphothreonine mark. Residue serine 83 is modified to Phosphoserine. Residue 127-129 (RTY) participates in (9Z)-octadecenoate binding. 127–129 (RTY) provides a ligand contact to hexadecanoate. 127-129 (RTY) is an octadecanoate binding site.

The protein belongs to the calycin superfamily. Fatty-acid binding protein (FABP) family.

It is found in the cytoplasm. FABPs are thought to play a role in the intracellular transport of long-chain fatty acids and their acyl-CoA esters. This Homo sapiens (Human) protein is Fatty acid-binding protein, heart (FABP3).